The following is a 429-amino-acid chain: Glutamate-1-semialdehyde 2,1-aminomutase 1 (429 aa).

An N6-(pyridoxal phosphate)lysine modification is found at lysine 268.

The protein belongs to the class-III pyridoxal-phosphate-dependent aminotransferase family. HemL subfamily. Homodimer. The cofactor is pyridoxal 5'-phosphate.

It is found in the cytoplasm. It carries out the reaction (S)-4-amino-5-oxopentanoate = 5-aminolevulinate. It participates in porphyrin-containing compound metabolism; protoporphyrin-IX biosynthesis; 5-aminolevulinate from L-glutamyl-tRNA(Glu): step 2/2. This is Glutamate-1-semialdehyde 2,1-aminomutase 1 from Lysinibacillus sphaericus (strain C3-41).